We begin with the raw amino-acid sequence, 382 residues long: Apolipoprotein A-IV (382 aa).

The signal sequence occupies residues 1-20 (MFLKAVVLSLALVAVTGARA). Tandem repeats lie at residues 33-54 (DYFSQLGSNAKKAVEHLQKSEL), 60-81 (TLFQDKLGEVNTYTEDLQKKLV), 82-103 (PFATELHERLTKDSEKLKEEIR), 115-136 (PHATEVSQKIGDNVRELQQRLG), 137-158 (PFTGGLRTQVNTQVQQLQRQLK), 159-180 (PYAERMESVLRQNIRNLEASVA), 181-202 (PYADEFKAKIDQNVEELKGSLT), 203-224 (PYAEELKAKIDQNVEELRRSLA), 225-246 (PYAQDVQEKLNHQLEGLAFQMK), 247-268 (KQAEELKAKISANADELRQKLV), 269-286 (PVAENVHGHLKGNTEGLQ), 287-308 (KSLLELRSHLDQQVEEFRLKVE), and 309-330 (PYGETFNKALVQQVEDLRQKLG). Residues 33–330 (DYFSQLGSNA…QVEDLRQKLG (298 aa)) form a 13 X 22 AA approximate tandem repeats region. Positions 361 to 382 (EASQGQSQALPAQEKAQAPLEG) are disordered.

This sequence belongs to the apolipoprotein A1/A4/E family. Homodimer. As to expression, secreted in plasma.

It is found in the secreted. May have a role in chylomicrons and VLDL secretion and catabolism. Required for efficient activation of lipoprotein lipase by ApoC-II; potent activator of LCAT. Apoa-IV is a major component of HDL and chylomicrons. In Sus scrofa (Pig), this protein is Apolipoprotein A-IV (APOA4).